The sequence spans 1059 residues: MASVLKNKDEVGNILVKVQDDLRQLKKNIVQFTVQENGEILDIQALDAAIIRTENGIRRHAEDYLKTINNQVLTLPSIEEPEKKTAHPKLVTWQPPYEALPIAHPHRSPIPGPSPGEKHKTAFIMRLLHNPFHPRNKEIFQQNYGIQLPHLQKRTSIGIQRVVTGSNLGNFAIAHLQPKPPPECQDAVAELQPSAADLSSVQTPVQPKAVHVLQREDSGQNESKKVYKQEMDVRRDGMALRRSAMESAESRLLRAPPPSAASASSDNRVLTRGLARLSPINPQSLPVPAVVSKYPFTIVDGQIDPDAADFCRYKKQYCLYWGAMVEALERLQRMLLDFAVPLARVCGERLAACVQSGELNWRDGRGRCTHVEKLLSVLENRDEVWDLMCQPGQRYKGNGGHQAAAVRIQTCWRRYSARTAYLIRLRSKWAAEIIAMSLLKRAKLCHLKKSLQASRLRQLENFHSRAESLATNWKHITSAKRTIIHVPSLGYSQPRRLSLRGYDVLQNTQMGRLCDIRDENVEVIYVSPVRLGEDVLQYYTRLLGLQTAIELGDASATESHSAKRFTILMPEALEDFSTRNLCLASLLKYSPRTLKRIKNLIKGKQAYMISGVTHTDDLAVADELQIPLLGTDPVVTQLYSTKSGGKRIFSSAGVDMPPGKWDIYTLEKLYEGLAQLMAKHMEVQRWLFKIDSEVGGRGTAYVDVCHLKSRPWAQQEFIRHEPQQWRTSQSQDSVMIKFLEEVPHLLASYARLANTSCYKTWACFLEHFLKEGGVIEAFPPSQSLTCLAVDLLLEPGGDVLMLSCGDQLRGPSGLEVLGCTVPQTSICPEVLHSVCTRVGQACQQRSIMGHISLDLVTFLDPNNLEQQVWAIDLDLGYSNQLAMTQLMLMMTRGTLNCRTSKLEVPPSETSVTSRFAVMCTRLLHTNLPLVYYSTFFLMCKAQGIGYDVKARQGTVFALHDSRYRRSLGMLTISENLQGALLTFARNLSIIHQEISAPNMQGASNFKELIKDIEEVLGMTIQNQTASQEEKEITGVGSDWLSTHKLHQHKMSQCTKPILQ.

Residues 6–35 (KNKDEVGNILVKVQDDLRQLKKNIVQFTVQ) adopt a coiled-coil conformation. Residues 245 to 267 (MESAESRLLRAPPPSAASASSDN) form a disordered region. In terms of domain architecture, IQ spans 401–430 (HQAAAVRIQTCWRRYSARTAYLIRLRSKWA).

This Danio rerio (Zebrafish) protein is IQ motif-containing protein H (iqch).